A 289-amino-acid polypeptide reads, in one-letter code: Serine/threonine-protein phosphatase PGAM5, mitochondrial (289 aa).

The Mitochondrial matrix portion of the chain corresponds to 1-6 (MAFRQA). The chain crosses the membrane as a helical span at residues 7–29 (LQLAACGLAGGSAAVLFSAVAVG). Residues 30–289 (KPRAGGDAEP…FMPPDKITRS (260 aa)) are Mitochondrial intermembrane-facing. A disordered region spans residues 32–59 (RAGGDAEPRPAEPPAWAGGARPGPGVWD). Low complexity predominate over residues 45-56 (PAWAGGARPGPG). Residues 77–82 (NVESGE) form an interaction with KEAP1 region. Phosphoserine occurs at positions 80 and 87. An N6-acetyllysine mark is found at Lys116, Lys144, and Lys191.

This sequence belongs to the phosphoglycerate mutase family. BPG-dependent PGAM subfamily. In terms of assembly, dimer. Forms a ternary complex with NFE2L2 and KEAP1. Interacts with BCL2L1 and MAP3K5. Upon TNF-induced necrosis, forms in complex with RIPK1, RIPK3 and MLKL; the formation of this complex leads to PGAM5 phosphorylation. Isoform 2, but not isoform 1, interacts with DNM1L; this interaction leads to DNM1L dephosphorylation and activation and eventually to mitochondria fragmentation. Post-translationally, both isoform 1 and isoform 2 are phosphorylated by the RIPK1/RIPK3 complex under necrotic conditions. This phosphorylation increases PGAM5 phosphatase activity. In terms of processing, proteolytically cleaved by PARL in response to loss of mitochondrial membrane potential.

It is found in the mitochondrion outer membrane. The protein localises to the mitochondrion inner membrane. The enzyme catalyses O-phospho-L-seryl-[protein] + H2O = L-seryl-[protein] + phosphate. It catalyses the reaction O-phospho-L-threonyl-[protein] + H2O = L-threonyl-[protein] + phosphate. In terms of biological role, mitochondrial serine/threonine phosphatase that dephosphorylates various substrates and thus plays a role in different biological processes including cellular senescence or mitophagy. Modulates cellular senescence by regulating mitochondrial dynamics. Mechanistically, participates in mitochondrial fission through dephosphorylating DNM1L/DRP1. Additionally, dephosphorylates MFN2 in a stress-sensitive manner and consequently protects it from ubiquitination and degradation to promote mitochondrial network formation. Regulates mitophagy independent of PARKIN by interacting with and dephosphorylating FUNDC1, which interacts with LC3. Regulates anti-oxidative response by forming a tertiary complex with KEAP1 and NRF2. Regulates necroptosis by acting as a RIPK3 target and recruiting the RIPK1-RIPK3-MLKL necrosis 'attack' complex to mitochondria. This Homo sapiens (Human) protein is Serine/threonine-protein phosphatase PGAM5, mitochondrial (PGAM5).